An 80-amino-acid polypeptide reads, in one-letter code: Three-finger toxin MALT0059C (80 aa).

The first 21 residues, 1–21 (MRTLLLTLVVVTIVCLDLGNS), serve as a signal peptide directing secretion. Cystine bridges form between C24/C41, C35/C60, C64/C72, and C73/C78.

This sequence belongs to the three-finger toxin family. Short-chain subfamily. In terms of tissue distribution, expressed by the venom gland.

It localises to the secreted. Functionally, neurotoxin. Blocks muscular nicotinic acetylcholine receptors (nAChR). The protein is Three-finger toxin MALT0059C of Micrurus altirostris (Uruguayan coral snake).